A 559-amino-acid polypeptide reads, in one-letter code: Formate--tetrahydrofolate ligase (559 aa).

Residue 68 to 75 (TPAGEGKS) coordinates ATP.

It belongs to the formate--tetrahydrofolate ligase family.

The catalysed reaction is (6S)-5,6,7,8-tetrahydrofolate + formate + ATP = (6R)-10-formyltetrahydrofolate + ADP + phosphate. Its pathway is one-carbon metabolism; tetrahydrofolate interconversion. This chain is Formate--tetrahydrofolate ligase, found in Clostridium tetani (strain Massachusetts / E88).